A 141-amino-acid polypeptide reads, in one-letter code: NADPH-dependent 7-cyano-7-deazaguanine reductase (141 aa).

C56 serves as the catalytic Thioimide intermediate. The active-site Proton donor is D63. Substrate-binding positions include 78–80 (VEL) and 97–98 (HE).

It belongs to the GTP cyclohydrolase I family. QueF type 1 subfamily.

It is found in the cytoplasm. It carries out the reaction 7-aminomethyl-7-carbaguanine + 2 NADP(+) = 7-cyano-7-deazaguanine + 2 NADPH + 3 H(+). It participates in tRNA modification; tRNA-queuosine biosynthesis. In terms of biological role, catalyzes the NADPH-dependent reduction of 7-cyano-7-deazaguanine (preQ0) to 7-aminomethyl-7-deazaguanine (preQ1). The sequence is that of NADPH-dependent 7-cyano-7-deazaguanine reductase from Trichodesmium erythraeum (strain IMS101).